A 300-amino-acid chain; its full sequence is Probable mitochondrial 2-oxodicarboxylate carrier (300 aa).

The disordered stretch occupies residues 1 to 20 (MTSKGNAGNPPTPTPAPVKS). Solcar repeat units lie at residues 21–104 (QPLW…YEKQ), 114–200 (PTQM…IKSA), and 209–295 (GVLV…VMKL). Helical transmembrane passes span 27-47 (LVSG…LDVV), 74-93 (LKMY…KRAI), 120-140 (IGSG…FELV), 171-191 (GFFK…GGYF), 209-229 (GVLV…TMLN), and 278-298 (LGPG…LLAG).

The protein belongs to the mitochondrial carrier (TC 2.A.29) family.

The protein resides in the mitochondrion inner membrane. The enzyme catalyses 2-oxoadipate(in) + 2-oxoglutarate(out) = 2-oxoadipate(out) + 2-oxoglutarate(in). The catalysed reaction is hexanedioate(in) + 2-oxoglutarate(out) = hexanedioate(out) + 2-oxoglutarate(in). It carries out the reaction L-2-aminoadipate(in) + 2-oxoglutarate(out) = L-2-aminoadipate(out) + 2-oxoglutarate(in). It catalyses the reaction glutarate(in) + 2-oxoglutarate(out) = glutarate(out) + 2-oxoglutarate(in). The enzyme catalyses 2-oxoheptanedioate(in) + 2-oxoglutarate(out) = 2-oxoheptanedioate(out) + 2-oxoglutarate(in). The catalysed reaction is heptanedioate(in) + 2-oxoglutarate(out) = heptanedioate(out) + 2-oxoglutarate(in). It carries out the reaction citrate(in) + 2-oxoglutarate(out) = citrate(out) + 2-oxoglutarate(in). Its function is as follows. Transports dicarboxylates across the inner membranes of mitochondria by a counter-exchange mechanism. Can transport 2-oxoadipate (2-oxohexanedioate), 2-oxoglutarate, adipate (hexanedioate), glutarate, and to a lesser extent, pimelate (heptanedioate), 2-oxopimelate (2-oxoheptanedioate), 2-aminoadipate (2-aminohexanedioate), oxaloacetate, and citrate. Plays a central role in catabolism of lysine, hydroxylysine, and tryptophan, by transporting common metabolite intermediates (such as 2-oxoadipate) into the mitochondria, where it is converted into acetyl-CoA and can enter the citric acid (TCA) cycle. This Dictyostelium discoideum (Social amoeba) protein is Probable mitochondrial 2-oxodicarboxylate carrier (mcfT).